The sequence spans 529 residues: MTLSPYLQEVAKRRTFAIISHPDAGKTTITEKVLLFGQAIQTAGTVKGRGSNQHAKSDWMEMEKQRGISITTSVMQFPYHDCLVNLLDTPGHEDFSEDTYRTLTAVDCCLMVIDAAKGVEDRTRKLMEVTRLRDTPILTFMNKLDRDIRDPMELLDEVENELKIGCAPITWPIGCGKLFKGVYHLYKDETYLYQSGKGHTIQEVRIVKGLNNPDLDAAVGEDLAQQLRDELELVKGASNEFDKELFLAGEITPVFFGTALGNFGVDHMLDGLVEWAPAPMPRQTDTRTVEASEDKFTGFVFKIQANMDPKHRDRVAFMRVVSGKYEKGMKLRQVRTAKDVVISDALTFMAGDRSHVEEAYPGDILGLHNHGTIQIGDTFTQGEMMKFTGIPNFAPELFRRIRLKDPLKQKQLLKGLVQLSEEGAVQVFRPISNNDLIVGAVGVLQFDVVVSRLKSEYNVEAVYESVNVATARWVECADAKKFEEFKRKNESQLALDGGDNLAYIATSMVNLRLAQERYPDVQFHQTREH.

Residues 11-280 (AKRRTFAIIS…GLVEWAPAPM (270 aa)) form the tr-type G domain. Residues 20–27 (SHPDAGKT), 88–92 (DTPGH), and 142–145 (NKLD) contribute to the GTP site.

The protein belongs to the TRAFAC class translation factor GTPase superfamily. Classic translation factor GTPase family. PrfC subfamily.

The protein localises to the cytoplasm. Functionally, increases the formation of ribosomal termination complexes and stimulates activities of RF-1 and RF-2. It binds guanine nucleotides and has strong preference for UGA stop codons. It may interact directly with the ribosome. The stimulation of RF-1 and RF-2 is significantly reduced by GTP and GDP, but not by GMP. The protein is Peptide chain release factor 3 of Shigella boydii serotype 18 (strain CDC 3083-94 / BS512).